We begin with the raw amino-acid sequence, 162 residues long: Ribosomal RNA large subunit methyltransferase H (162 aa).

S-adenosyl-L-methionine contacts are provided by residues Leu-78, Gly-109, and 128-133 (LSPLTL).

Belongs to the RNA methyltransferase RlmH family. In terms of assembly, homodimer.

Its subcellular location is the cytoplasm. It catalyses the reaction pseudouridine(1915) in 23S rRNA + S-adenosyl-L-methionine = N(3)-methylpseudouridine(1915) in 23S rRNA + S-adenosyl-L-homocysteine + H(+). Functionally, specifically methylates the pseudouridine at position 1915 (m3Psi1915) in 23S rRNA. The protein is Ribosomal RNA large subunit methyltransferase H of Psychrobacter sp. (strain PRwf-1).